Here is a 598-residue protein sequence, read N- to C-terminus: MAARLPLAACVVAFHLCLLLSSLVRSPSTALRRLSEAESSLVRHGHGVGIRPAYHFLPAKNWQNDPNGPMYHNGVYHMFYQYNPLGAMWQPGNLSWGHSVSRDLVNWDALDTALDPTAPFDYNGCWSGSATILPGGIPALLYTGRIDADKEVQVQNVAFPKNPADPLLREWVKPAYNPVIPLPADVPGDNFRDPTTAWVGRDGLWRIAVAAKVGGPNGIASTLIYRSKDFRHWKRNASPLYTSRAAGMVECPDLFPVAEPGVEEGRLGYASGPASGAVRHVLKLSVMNTTQDYYAVGRYDDVADTFVPEVDVERNADDCRTWRRFDYGHVYASKSFFDSSKNRRVLWAWANESDSQDNDIARGWSGVQTVPRKVWLDEDGKQVRQWPIEEIETLRSKRVVGLLGAQVNAGGVNKITGVGAQADVEAIFEIPSLEEAETFQPNWLLDPQKLCEENGASVPGKVGPFGLLVMASSNMQEHTAIFFRVFRHNQKYKVLMCTDLTRSTGRDNVYKPSYGGFVDIDIEQQGRTISLRTLIDHSVVESFGGGGRTCITARVYPEHAENKNSHVFVFNNGTGLVKVSKLEAWRLAMASVNVVHGR.

Residues 1 to 30 (MAARLPLAACVVAFHLCLLLSSLVRSPSTA) form the signal peptide. Aspartate 65 is an active-site residue. N-linked (GlcNAc...) asparagine glycosylation is found at asparagine 93, asparagine 288, and asparagine 351. Cysteine 451 and cysteine 497 are oxidised to a cystine. N-linked (GlcNAc...) asparagine glycosylation is present at asparagine 572.

This sequence belongs to the glycosyl hydrolase 32 family. In terms of tissue distribution, expressed in leaves, stems, roots and inflorescences. Maximum expression is detected in stems, particularly the penultimate internode.

The catalysed reaction is Hydrolysis of terminal, non-reducing (2-&gt;6)-linked beta-D-fructofuranose residues in fructans.. Not inhibited by sucrose. Functionally, hydrolyzes levan-type beta-(2-&gt;6)-linked fructans to fructose, but not inulin-type beta-(2-&gt;1)-linked fructans. This Triticum aestivum (Wheat) protein is Fructan 6-exohydrolase.